The sequence spans 253 residues: Triosephosphate isomerase (253 aa).

8 to 10 (NWK) serves as a coordination point for substrate. Catalysis depends on histidine 91, which acts as the Electrophile. Glutamate 168 (proton acceptor) is an active-site residue. Residues glycine 174, serine 213, and 234 to 235 (GG) contribute to the substrate site.

It belongs to the triosephosphate isomerase family. As to quaternary structure, homodimer.

The protein localises to the cytoplasm. It catalyses the reaction D-glyceraldehyde 3-phosphate = dihydroxyacetone phosphate. It participates in carbohydrate biosynthesis; gluconeogenesis. It functions in the pathway carbohydrate degradation; glycolysis; D-glyceraldehyde 3-phosphate from glycerone phosphate: step 1/1. Involved in the gluconeogenesis. Catalyzes stereospecifically the conversion of dihydroxyacetone phosphate (DHAP) to D-glyceraldehyde-3-phosphate (G3P). This is Triosephosphate isomerase from Acidiphilium cryptum (strain JF-5).